Reading from the N-terminus, the 186-residue chain is Peptide deformylase (186 aa).

Residues Cys94 and His136 each contribute to the Fe cation site. Glu137 is a catalytic residue. His140 is a Fe cation binding site.

This sequence belongs to the polypeptide deformylase family. The cofactor is Fe(2+).

It catalyses the reaction N-terminal N-formyl-L-methionyl-[peptide] + H2O = N-terminal L-methionyl-[peptide] + formate. Functionally, removes the formyl group from the N-terminal Met of newly synthesized proteins. Requires at least a dipeptide for an efficient rate of reaction. N-terminal L-methionine is a prerequisite for activity but the enzyme has broad specificity at other positions. The sequence is that of Peptide deformylase from Prosthecochloris aestuarii (strain DSM 271 / SK 413).